Consider the following 252-residue polypeptide: Glucosamine-6-phosphate deaminase (252 aa).

The active-site Proton acceptor; for enolization step is aspartate 64. The active-site For ring-opening step is the asparagine 130. The Proton acceptor; for ring-opening step role is filled by histidine 132. Glutamate 137 serves as the catalytic For ring-opening step.

This sequence belongs to the glucosamine/galactosamine-6-phosphate isomerase family. NagB subfamily.

It carries out the reaction alpha-D-glucosamine 6-phosphate + H2O = beta-D-fructose 6-phosphate + NH4(+). It participates in amino-sugar metabolism; N-acetylneuraminate degradation; D-fructose 6-phosphate from N-acetylneuraminate: step 5/5. Catalyzes the reversible isomerization-deamination of glucosamine 6-phosphate (GlcN6P) to form fructose 6-phosphate (Fru6P) and ammonium ion. The chain is Glucosamine-6-phosphate deaminase from Exiguobacterium sibiricum (strain DSM 17290 / CCUG 55495 / CIP 109462 / JCM 13490 / 255-15).